Here is a 278-residue protein sequence, read N- to C-terminus: HTH-type transcriptional activator RhaS (278 aa).

The 99-residue stretch at 174–272 (NQLLAWLEDH…DWSPRDIRQG (99 aa)) folds into the HTH araC/xylS-type domain. DNA-binding regions (H-T-H motif) lie at residues 191-212 (EEVAAQFSLSLRTLHRQLKQQT) and 239-262 (VTDIAFRCGFGDSNHFSTLFRREF).

As to quaternary structure, binds DNA as a dimer.

It localises to the cytoplasm. In terms of biological role, activates expression of the rhaBAD and rhaT operons. The polypeptide is HTH-type transcriptional activator RhaS (Klebsiella pneumoniae (strain 342)).